The primary structure comprises 492 residues: N-succinylglutamate 5-semialdehyde dehydrogenase (492 aa).

Residue 220–225 participates in NAD(+) binding; it reads GSANTG. Active-site residues include Glu-243 and Cys-277.

The protein belongs to the aldehyde dehydrogenase family. AstD subfamily.

The enzyme catalyses N-succinyl-L-glutamate 5-semialdehyde + NAD(+) + H2O = N-succinyl-L-glutamate + NADH + 2 H(+). Its pathway is amino-acid degradation; L-arginine degradation via AST pathway; L-glutamate and succinate from L-arginine: step 4/5. Its function is as follows. Catalyzes the NAD-dependent reduction of succinylglutamate semialdehyde into succinylglutamate. The sequence is that of N-succinylglutamate 5-semialdehyde dehydrogenase from Shigella flexneri.